The following is a 317-amino-acid chain: Glutaminase (317 aa).

Substrate-binding residues include S67, N118, E162, N169, Y193, Y245, and V263.

It belongs to the glutaminase family. As to quaternary structure, homotetramer.

The catalysed reaction is L-glutamine + H2O = L-glutamate + NH4(+). In Brucella abortus (strain S19), this protein is Glutaminase.